Reading from the N-terminus, the 164-residue chain is UPF0304 protein Ent638_2838 (164 aa).

The protein belongs to the UPF0304 family.

This Enterobacter sp. (strain 638) protein is UPF0304 protein Ent638_2838.